We begin with the raw amino-acid sequence, 289 residues long: Oxaloacetate decarboxylase (289 aa).

Serine 50 contributes to the substrate binding site. Aspartate 88 is a binding site for Mg(2+). Residues arginine 159 and histidine 235 each coordinate substrate.

Belongs to the isocitrate lyase/PEP mutase superfamily. Oxaloacetate decarboxylase family. In terms of assembly, homotetramer; dimer of dimers. The cofactor is Mg(2+).

The enzyme catalyses oxaloacetate + H(+) = pyruvate + CO2. Its function is as follows. Catalyzes the decarboxylation of oxaloacetate into pyruvate. Seems to play a role in maintaining cellular concentrations of bicarbonate and pyruvate. The protein is Oxaloacetate decarboxylase of Pseudomonas putida (strain GB-1).